The primary structure comprises 349 residues: GMP reductase (349 aa).

108 to 131 contributes to the NADP(+) binding site; sequence IDFLKIKKIFLLSSELKYICIDVA. 2 residues coordinate K(+): G181 and G183. The active-site Thioimidate intermediate is C186. 216-239 is an NADP(+) binding site; the sequence is IISDGGCTVSGDIAKAFGGGADFV.

Belongs to the IMPDH/GMPR family. GuaC type 1 subfamily. In terms of assembly, homotetramer.

It catalyses the reaction IMP + NH4(+) + NADP(+) = GMP + NADPH + 2 H(+). Catalyzes the irreversible NADPH-dependent deamination of GMP to IMP. It functions in the conversion of nucleobase, nucleoside and nucleotide derivatives of G to A nucleotides, and in maintaining the intracellular balance of A and G nucleotides. This chain is GMP reductase, found in Buchnera aphidicola subsp. Acyrthosiphon pisum (strain Tuc7).